Reading from the N-terminus, the 351-residue chain is DNA polymerase IV (351 aa).

Residues 4-185 (IIHVDMDCFF…LPLAKIPGVG (182 aa)) form the UmuC domain. Residues Asp8 and Asp103 each contribute to the Mg(2+) site. The active site involves Glu104.

The protein belongs to the DNA polymerase type-Y family. As to quaternary structure, monomer. It depends on Mg(2+) as a cofactor.

It localises to the cytoplasm. It carries out the reaction DNA(n) + a 2'-deoxyribonucleoside 5'-triphosphate = DNA(n+1) + diphosphate. In terms of biological role, poorly processive, error-prone DNA polymerase involved in untargeted mutagenesis. Copies undamaged DNA at stalled replication forks, which arise in vivo from mismatched or misaligned primer ends. These misaligned primers can be extended by PolIV. Exhibits no 3'-5' exonuclease (proofreading) activity. May be involved in translesional synthesis, in conjunction with the beta clamp from PolIII. In Escherichia coli O1:K1 / APEC, this protein is DNA polymerase IV.